The following is a 221-amino-acid chain: Oxaloacetate tautomerase FAHD1, mitochondrial (221 aa).

The transit peptide at 1–24 (MASTKPLSRFWEWGKNIVCVGRNY) directs the protein to the mitochondrion. Residue serine 37 is modified to Phosphoserine. Mg(2+) contacts are provided by glutamate 68, glutamate 70, and aspartate 99. Lysine 110 is modified (N6-acetyllysine). Lysine 112 is subject to N6-succinyllysine.

This sequence belongs to the FAH family. In terms of assembly, homodimer. Mg(2+) serves as cofactor. It depends on Mn(2+) as a cofactor.

The protein resides in the mitochondrion. Its subcellular location is the cytoplasm. The protein localises to the cytosol. It carries out the reaction oxaloacetate = enol-oxaloacetate. The enzyme catalyses oxaloacetate + H(+) = pyruvate + CO2. The catalysed reaction is a 3-acylpyruvate + H2O = a carboxylate + pyruvate + H(+). It catalyses the reaction acetylpyruvate + H2O = acetate + pyruvate + H(+). It carries out the reaction 3-fumarylpyruvate + H2O = fumarate + pyruvate + H(+). Oxaloacetate decarboxylation is competitively inhibited by oxalate. Its function is as follows. Tautomerase that converts enol-oxaloacetate, a strong inhibitor of succinate dehydrogenase, to the physiological keto form of oxaloacetate. It is thereby required to maximize aerobic respiration efficiency by preventing succinate dehydrogenase inhibition. Also acts as a weak oxaloacetate decarboxylase (ODx), catalyzing the decarboxylation of oxaloacetate (OAA) to pyruvate and CO(2), and as such is likely a regulatory enzyme in the TCA cycle. Also displays acylpyruvase activity, being able to hydrolyze acetylpyruvate and fumarylpyruvate in vitro. The polypeptide is Oxaloacetate tautomerase FAHD1, mitochondrial (Rattus norvegicus (Rat)).